Consider the following 49-residue polypeptide: Large ribosomal subunit protein bL33 (49 aa).

The protein belongs to the bacterial ribosomal protein bL33 family.

The protein is Large ribosomal subunit protein bL33 of Syntrophotalea carbinolica (strain DSM 2380 / NBRC 103641 / GraBd1) (Pelobacter carbinolicus).